The primary structure comprises 369 residues: Anhydro-N-acetylmuramic acid kinase (369 aa).

Residue 12–19 (GTSMDGVD) participates in ATP binding.

It belongs to the anhydro-N-acetylmuramic acid kinase family.

It catalyses the reaction 1,6-anhydro-N-acetyl-beta-muramate + ATP + H2O = N-acetyl-D-muramate 6-phosphate + ADP + H(+). The protein operates within amino-sugar metabolism; 1,6-anhydro-N-acetylmuramate degradation. It participates in cell wall biogenesis; peptidoglycan recycling. Its function is as follows. Catalyzes the specific phosphorylation of 1,6-anhydro-N-acetylmuramic acid (anhMurNAc) with the simultaneous cleavage of the 1,6-anhydro ring, generating MurNAc-6-P. Is required for the utilization of anhMurNAc either imported from the medium or derived from its own cell wall murein, and thus plays a role in cell wall recycling. The sequence is that of Anhydro-N-acetylmuramic acid kinase from Shewanella oneidensis (strain ATCC 700550 / JCM 31522 / CIP 106686 / LMG 19005 / NCIMB 14063 / MR-1).